A 294-amino-acid polypeptide reads, in one-letter code: Acetyl-coenzyme A carboxylase carboxyl transferase subunit beta (294 aa).

The CoA carboxyltransferase N-terminal domain maps to Ile-25–Glu-294. Zn(2+) is bound by residues Cys-29, Cys-32, Cys-48, and Cys-51. The C4-type zinc finger occupies Cys-29–Cys-51.

Belongs to the AccD/PCCB family. In terms of assembly, acetyl-CoA carboxylase is a heterohexamer composed of biotin carboxyl carrier protein (AccB), biotin carboxylase (AccC) and two subunits each of ACCase subunit alpha (AccA) and ACCase subunit beta (AccD). Zn(2+) serves as cofactor.

It localises to the cytoplasm. It catalyses the reaction N(6)-carboxybiotinyl-L-lysyl-[protein] + acetyl-CoA = N(6)-biotinyl-L-lysyl-[protein] + malonyl-CoA. It participates in lipid metabolism; malonyl-CoA biosynthesis; malonyl-CoA from acetyl-CoA: step 1/1. Component of the acetyl coenzyme A carboxylase (ACC) complex. Biotin carboxylase (BC) catalyzes the carboxylation of biotin on its carrier protein (BCCP) and then the CO(2) group is transferred by the transcarboxylase to acetyl-CoA to form malonyl-CoA. This chain is Acetyl-coenzyme A carboxylase carboxyl transferase subunit beta, found in Blochmanniella pennsylvanica (strain BPEN).